Reading from the N-terminus, the 175-residue chain is CDP-archaeol synthase (175 aa).

Helical transmembrane passes span Gly-41–Phe-61, Leu-82–Phe-102, Phe-122–Phe-142, and Val-150–Val-170.

This sequence belongs to the CDP-archaeol synthase family. Requires Mg(2+) as cofactor.

It localises to the cell membrane. The enzyme catalyses 2,3-bis-O-(geranylgeranyl)-sn-glycerol 1-phosphate + CTP + H(+) = CDP-2,3-bis-O-(geranylgeranyl)-sn-glycerol + diphosphate. The protein operates within membrane lipid metabolism; glycerophospholipid metabolism. Its function is as follows. Catalyzes the formation of CDP-2,3-bis-(O-geranylgeranyl)-sn-glycerol (CDP-archaeol) from 2,3-bis-(O-geranylgeranyl)-sn-glycerol 1-phosphate (DGGGP) and CTP. This reaction is the third ether-bond-formation step in the biosynthesis of archaeal membrane lipids. The sequence is that of CDP-archaeol synthase from Methanosarcina mazei (strain ATCC BAA-159 / DSM 3647 / Goe1 / Go1 / JCM 11833 / OCM 88) (Methanosarcina frisia).